Consider the following 93-residue polypeptide: Antitoxin RelF (93 aa).

This sequence belongs to the phD/YefM antitoxin family. Interacts with toxin RelG, which neutralizes the toxin. Also interacts with toxins RelE and RelK in vitro, in M.smegmatis coexpression with non-cognate toxins increases the toxicity of RelE but not of RelK.

Functionally, antitoxin component of a type II toxin-antitoxin (TA) system. Upon expression in M.smegmatis neutralizes the effect of toxin RelE2. Its function is as follows. Induces its own promoter, in combination with RelG represses its own promoter. Has been seen to bind DNA in complex with toxin RelG but not alone. The protein is Antitoxin RelF (relF) of Mycobacterium tuberculosis (strain ATCC 25618 / H37Rv).